The sequence spans 216 residues: ATP-dependent Clp protease proteolytic subunit (216 aa).

The active-site Nucleophile is the S120. Residue H145 is part of the active site.

This sequence belongs to the peptidase S14 family. Fourteen ClpP subunits assemble into 2 heptameric rings which stack back to back to give a disk-like structure with a central cavity, resembling the structure of eukaryotic proteasomes.

Its subcellular location is the cytoplasm. It carries out the reaction Hydrolysis of proteins to small peptides in the presence of ATP and magnesium. alpha-casein is the usual test substrate. In the absence of ATP, only oligopeptides shorter than five residues are hydrolyzed (such as succinyl-Leu-Tyr-|-NHMec, and Leu-Tyr-Leu-|-Tyr-Trp, in which cleavage of the -Tyr-|-Leu- and -Tyr-|-Trp bonds also occurs).. In terms of biological role, cleaves peptides in various proteins in a process that requires ATP hydrolysis. Has a chymotrypsin-like activity. Plays a major role in the degradation of misfolded proteins. This chain is ATP-dependent Clp protease proteolytic subunit, found in Cupriavidus metallidurans (strain ATCC 43123 / DSM 2839 / NBRC 102507 / CH34) (Ralstonia metallidurans).